The following is a 973-amino-acid chain: Valine--tRNA ligase (973 aa).

A 'HIGH' region motif is present at residues 57 to 67 (PNVTGSLHMGH). The 'KMSKS' region signature appears at 569–573 (KMSKS). K572 is a binding site for ATP. The stretch at 901-970 (MAGLIDKEAE…AKILEQKIQI (70 aa)) forms a coiled coil.

It belongs to the class-I aminoacyl-tRNA synthetase family. ValS type 1 subfamily. Monomer.

The protein resides in the cytoplasm. It carries out the reaction tRNA(Val) + L-valine + ATP = L-valyl-tRNA(Val) + AMP + diphosphate. Its function is as follows. Catalyzes the attachment of valine to tRNA(Val). As ValRS can inadvertently accommodate and process structurally similar amino acids such as threonine, to avoid such errors, it has a 'posttransfer' editing activity that hydrolyzes mischarged Thr-tRNA(Val) in a tRNA-dependent manner. In Colwellia psychrerythraea (strain 34H / ATCC BAA-681) (Vibrio psychroerythus), this protein is Valine--tRNA ligase.